The primary structure comprises 615 residues: MYTYTTIREIVDKLNLEILNEGNLDLKIDIPNIYQIGYELVGFLDKESDELNKYINICSLKESRFIATFSKERKEKVISEYMSLDFPALIFTKDAIITEEFYYYAKRYNKNILLSNEKASVTVRKIKFFLSKALSIEEEYENYSLMEIHGVGVLMSGYSNARKGVMIELIERGHRMVTDKNLIIRRVGENDLVGYNAKKREKLGHFYLEDIKGGYVDVTDHFGVKSTRIEKKINILIVLEEWNEKEFYDRLGLDVQYEDFVGEKIQKYIIPVRKGRNLAVIIETAALTFRLRRMGHNTPLEFLTKSQEIIERKKKEREEYMNTNRLPVTKLINEFDLEIKYGEDKVSSTYINSSNVYRPSLSLIGFFDLIEEVKNIGIQIFSKIEFKFLENLPPIERVNNLKKFLTYDIPMIVLTVDANPPDYFFDLVSKSGHILAIAPYKKASQIVANFNNYLDSFFSETTSVHGVLVELFGFGVLLTGKSGIGKSETALELIHRGHRLIADDMVKFYRNTQGDVVGKSAELPFFMEIRGLGIIDIKTLYGLSAVRLSKTLDMIIELQAVDNSDYMSAPSAHLYEDVLGKPIKKRILEISSGRNAAAMVEVMVMDHMSGLLGEK.

Glycine 480 to serine 487 serves as a coordination point for ATP.

Belongs to the HPrK/P family.

It carries out the reaction [HPr protein]-L-serine + ATP = [HPr protein]-O-phospho-L-serine + ADP + H(+). The catalysed reaction is [HPr protein]-O-phospho-L-serine + phosphate + H(+) = [HPr protein]-L-serine + diphosphate. Catalyzes the ATP- as well as the pyrophosphate-dependent phosphorylation of a specific serine residue in HPr, a phosphocarrier protein of the phosphoenolpyruvate-dependent sugar phosphotransferase system (PTS). HprK/P also catalyzes the pyrophosphate-producing, inorganic phosphate-dependent dephosphorylation (phosphorolysis) of seryl-phosphorylated HPr (P-Ser-HPr). The chain is Putative HPr kinase/phosphorylase (hprK) from Fusobacterium nucleatum subsp. nucleatum (strain ATCC 25586 / DSM 15643 / BCRC 10681 / CIP 101130 / JCM 8532 / KCTC 2640 / LMG 13131 / VPI 4355).